We begin with the raw amino-acid sequence, 208 residues long: MLGLLVALLALGLAVFALLDVWYLVRLPCAVLRARLLQPRVRDLLAEQRFPGRVLPSDLDLLLHMNNARYLREADFARVAHLTRCGVLGALRELRAHTVLAASCARHRRSLRLLEPFEVRTRLLGWDDRAFYLEARFVSLRDGFVCALLRFRQHLLGTSPERVVQHLCQRRVEPPELPADLQHWISYNEASSQLLRMESGLSDVTKDQ.

The first 17 residues, 1-17, serve as a signal peptide directing secretion; it reads MLGLLVALLALGLAVFA. Position 199 is a phosphoserine (Ser-199).

This sequence belongs to the THEM6 family.

The protein resides in the secreted. This is Protein THEM6 (THEM6) from Homo sapiens (Human).